The following is a 221-amino-acid chain: Probable hydrogenase maturation factor HypB (221 aa).

The segment at Ala-35–Val-196 is G-domain. 2 residues coordinate Ni(2+): Cys-95 and His-96. Zn(2+)-binding residues include Cys-95, His-96, His-100, His-104, and Cys-127. Cys-127 provides a ligand contact to Ni(2+).

It belongs to the SIMIBI class G3E GTPase family. HypB/HupM subfamily. In terms of assembly, homodimer.

In terms of biological role, involved in the maturation of [NiFe] hydrogenases. Required for nickel insertion into the metal center of the hydrogenase. Exhibits a low intrinsic GTPase activity, which is essential for nickel insertion. The protein is Probable hydrogenase maturation factor HypB of Methanocaldococcus jannaschii (strain ATCC 43067 / DSM 2661 / JAL-1 / JCM 10045 / NBRC 100440) (Methanococcus jannaschii).